Here is a 507-residue protein sequence, read N- to C-terminus: ATP synthase subunit alpha, chloroplastic (507 aa).

170–177 (GDRQTGKT) contributes to the ATP binding site.

Belongs to the ATPase alpha/beta chains family. As to quaternary structure, F-type ATPases have 2 components, CF(1) - the catalytic core - and CF(0) - the membrane proton channel. CF(1) has five subunits: alpha(3), beta(3), gamma(1), delta(1), epsilon(1). CF(0) has four main subunits: a, b, b' and c.

The protein localises to the plastid. It is found in the chloroplast thylakoid membrane. It catalyses the reaction ATP + H2O + 4 H(+)(in) = ADP + phosphate + 5 H(+)(out). In terms of biological role, produces ATP from ADP in the presence of a proton gradient across the membrane. The alpha chain is a regulatory subunit. The sequence is that of ATP synthase subunit alpha, chloroplastic from Solanum bulbocastanum (Wild potato).